We begin with the raw amino-acid sequence, 67 residues long: Protein C' (67 aa).

It belongs to the rhabdoviruses C protein family.

Seems to stimulates transcription by the viral polymerase. May play a role in viral pathogenesis or transmission by insects vectors. The chain is Protein C' (P) from Vesicular stomatitis Indiana virus (strain 85CLB South America) (VSIV).